The following is a 149-amino-acid chain: Large ribosomal subunit protein bL9 (149 aa).

This sequence belongs to the bacterial ribosomal protein bL9 family.

Functionally, binds to the 23S rRNA. The polypeptide is Large ribosomal subunit protein bL9 (Bacillus licheniformis (strain ATCC 14580 / DSM 13 / JCM 2505 / CCUG 7422 / NBRC 12200 / NCIMB 9375 / NCTC 10341 / NRRL NRS-1264 / Gibson 46)).